Here is a 72-residue protein sequence, read N- to C-terminus: Translation initiation factor IF-1 (72 aa).

In terms of domain architecture, S1-like spans 1-72; the sequence is MAKEEAIEIE…TKGRITYRYK (72 aa).

The protein belongs to the IF-1 family. As to quaternary structure, component of the 30S ribosomal translation pre-initiation complex which assembles on the 30S ribosome in the order IF-2 and IF-3, IF-1 and N-formylmethionyl-tRNA(fMet); mRNA recruitment can occur at any time during PIC assembly.

It localises to the cytoplasm. One of the essential components for the initiation of protein synthesis. Stabilizes the binding of IF-2 and IF-3 on the 30S subunit to which N-formylmethionyl-tRNA(fMet) subsequently binds. Helps modulate mRNA selection, yielding the 30S pre-initiation complex (PIC). Upon addition of the 50S ribosomal subunit IF-1, IF-2 and IF-3 are released leaving the mature 70S translation initiation complex. The sequence is that of Translation initiation factor IF-1 from Chlorobium phaeobacteroides (strain DSM 266 / SMG 266 / 2430).